The primary structure comprises 493 residues: MISCNILGITIAAFITSTLAAYSSNGVNVMYYWGQNSAGGSNTQGSLVSYCQSGQVDVIILSFLNKFNMGGLPEINLASACEQTFFPNTNLLHCPTVGSDIKTCQSNGVKVLLSLGGAAGSYGFSSDSEGQTFAETIWNLFGGGTSDTRPFDDAVIDGIDLDIEGGSSTGYAAFVTALRSKGHFLIGAAPQCPFPDAILGSVIDAVGLDFVNVQFYNNVCSVASGSSFNFDVWNDWAKNKSPNKNIKVMLTVPGSSTAAGSGYASIAELGPIVSSVISQYSSFGGVSVWDASQAWNNNGFHSELYSIVHGSSAALGQAARKTPFPNTSSITTTSLATASSALFPLLYAGRSCSSQSKVSCTSTGSYTICNYGKWVTAPCPPGVICLSSAQSNNTDLTVSAQFFITSFAGGSFKAIINARRTTLTPFEKMKTIEFTVPDHVRLSQCNLGKIEQVGRSVRIRLKDHPNMAFVLNLSGNVSSDAFVAPDPSSWRFS.

Residues 1–20 form the signal peptide; sequence MISCNILGITIAAFITSTLA. One can recognise a GH18 domain in the interval 27 to 318; sequence VNVMYYWGQN…HGSSAALGQA (292 aa). The active-site Proton donor is the Glu164.

Belongs to the glycosyl hydrolase 18 family. Chitinase class III subfamily.

The catalysed reaction is Random endo-hydrolysis of N-acetyl-beta-D-glucosaminide (1-&gt;4)-beta-linkages in chitin and chitodextrins.. In Rhizopus niveus, this protein is Chitinase 1 (CHI1).